Here is a 275-residue protein sequence, read N- to C-terminus: Acetyl-coenzyme A carboxylase carboxyl transferase subunit beta (275 aa).

The region spanning 21 to 275 is the CoA carboxyltransferase N-terminal domain; it reads GLWIKCQCGA…IKIIGMHQAG (255 aa). Residues Cys26, Cys28, Cys44, and Cys47 each contribute to the Zn(2+) site. Residues 26–47 form a C4-type zinc finger; sequence CQCGAILFAKDLERNLKVCQKC.

The protein belongs to the AccD/PCCB family. In terms of assembly, acetyl-CoA carboxylase is a heterohexamer composed of biotin carboxyl carrier protein (AccB), biotin carboxylase (AccC) and two subunits each of ACCase subunit alpha (AccA) and ACCase subunit beta (AccD). The cofactor is Zn(2+).

The protein localises to the cytoplasm. It carries out the reaction N(6)-carboxybiotinyl-L-lysyl-[protein] + acetyl-CoA = N(6)-biotinyl-L-lysyl-[protein] + malonyl-CoA. It participates in lipid metabolism; malonyl-CoA biosynthesis; malonyl-CoA from acetyl-CoA: step 1/1. Component of the acetyl coenzyme A carboxylase (ACC) complex. Biotin carboxylase (BC) catalyzes the carboxylation of biotin on its carrier protein (BCCP) and then the CO(2) group is transferred by the transcarboxylase to acetyl-CoA to form malonyl-CoA. This is Acetyl-coenzyme A carboxylase carboxyl transferase subunit beta from Desulforudis audaxviator (strain MP104C).